The sequence spans 306 residues: Methionyl-tRNA formyltransferase (306 aa).

A (6S)-5,6,7,8-tetrahydrofolate-binding site is contributed by 110 to 113; it reads SLLP.

This sequence belongs to the Fmt family.

It carries out the reaction L-methionyl-tRNA(fMet) + (6R)-10-formyltetrahydrofolate = N-formyl-L-methionyl-tRNA(fMet) + (6S)-5,6,7,8-tetrahydrofolate + H(+). Attaches a formyl group to the free amino group of methionyl-tRNA(fMet). The formyl group appears to play a dual role in the initiator identity of N-formylmethionyl-tRNA by promoting its recognition by IF2 and preventing the misappropriation of this tRNA by the elongation apparatus. The polypeptide is Methionyl-tRNA formyltransferase (Brucella abortus (strain S19)).